The chain runs to 572 residues: NADP-dependent malic enzyme (572 aa).

Met1 carries the post-translational modification N-acetylmethionine. Tyr102 serves as the catalytic Proton donor. Residue Arg155 coordinates NADP(+). Lys173 functions as the Proton acceptor in the catalytic mechanism. Residues Glu245, Asp246, and Asp269 each contribute to the a divalent metal cation site. Residues Asp269 and 301–318 (GAGE…MAME) contribute to the NADP(+) site. Ser336 is subject to Phosphoserine. Asn408 provides a ligand contact to NADP(+).

The protein belongs to the malic enzymes family. Homotetramer. Mg(2+) is required as a cofactor. It depends on Mn(2+) as a cofactor. Ubiquitous. Up-regulated by 3,5,3'-triiodo-L-thyronine in the liver, kidney and heart.

The protein localises to the cytoplasm. It carries out the reaction (S)-malate + NADP(+) = pyruvate + CO2 + NADPH. The catalysed reaction is oxaloacetate + H(+) = pyruvate + CO2. Its function is as follows. Catalyzes the oxidative decarboxylation of (S)-malate in the presence of NADP(+) and divalent metal ions, and decarboxylation of oxaloacetate. The sequence is that of NADP-dependent malic enzyme (Me1) from Rattus norvegicus (Rat).